The chain runs to 378 residues: Flap endonuclease 1 (378 aa).

The segment at 1–104 is N-domain; sequence MGVKDLSKVI…SELEKRTERR (104 aa). Aspartate 34 provides a ligand contact to Mg(2+). DNA-binding residues include arginine 47 and arginine 70. Residue aspartate 86 participates in Mg(2+) binding. The tract at residues 90–113 is disordered; it reads PQMKTSELEKRTERRTEAEKQRND. Positions 95–113 are enriched in basic and acidic residues; the sequence is SELEKRTERRTEAEKQRND. Residues 122-253 form an I-domain region; the sequence is SVNKFEKRLV…KKAFELIKKY (132 aa). Residues glutamate 158, glutamate 160, aspartate 179, and aspartate 181 each contribute to the Mg(2+) site. Glutamate 158 is a binding site for DNA. DNA-binding residues include glycine 231 and aspartate 233. Aspartate 233 contacts Mg(2+). The interval 336–344 is interaction with PCNA; sequence QQARIDSFF. A disordered region spans residues 348 to 378; it reads KVVTSETTKRKNEEKNNLKKRGPSLGKKAKK. Positions 354–364 are enriched in basic and acidic residues; it reads TTKRKNEEKNN. Basic residues predominate over residues 365-378; the sequence is LKKRGPSLGKKAKK.

It belongs to the XPG/RAD2 endonuclease family. FEN1 subfamily. Interacts with PCNA. Three molecules of FEN1 bind to one PCNA trimer with each molecule binding to one PCNA monomer. PCNA stimulates the nuclease activity without altering cleavage specificity. Mg(2+) is required as a cofactor. In terms of processing, phosphorylated. Phosphorylation upon DNA damage induces relocalization to the nuclear plasma.

The protein resides in the nucleus. It is found in the nucleolus. Its subcellular location is the nucleoplasm. It localises to the mitochondrion. Structure-specific nuclease with 5'-flap endonuclease and 5'-3' exonuclease activities involved in DNA replication and repair. During DNA replication, cleaves the 5'-overhanging flap structure that is generated by displacement synthesis when DNA polymerase encounters the 5'-end of a downstream Okazaki fragment. It enters the flap from the 5'-end and then tracks to cleave the flap base, leaving a nick for ligation. Also involved in the long patch base excision repair (LP-BER) pathway, by cleaving within the apurinic/apyrimidinic (AP) site-terminated flap. Acts as a genome stabilization factor that prevents flaps from equilibrating into structures that lead to duplications and deletions. Also possesses 5'-3' exonuclease activity on nicked or gapped double-stranded DNA, and exhibits RNase H activity. Also involved in replication and repair of rDNA and in repairing mitochondrial DNA. The polypeptide is Flap endonuclease 1 (Brugia malayi (Filarial nematode worm)).